We begin with the raw amino-acid sequence, 233 residues long: Orotidine 5'-phosphate decarboxylase (233 aa).

Substrate-binding positions include D9, K31, 58–67 (DLKLHDIPNT), T120, R182, Q191, G211, and R212. K60 functions as the Proton donor in the catalytic mechanism.

This sequence belongs to the OMP decarboxylase family. Type 1 subfamily. In terms of assembly, homodimer.

It carries out the reaction orotidine 5'-phosphate + H(+) = UMP + CO2. It participates in pyrimidine metabolism; UMP biosynthesis via de novo pathway; UMP from orotate: step 2/2. In terms of biological role, catalyzes the decarboxylation of orotidine 5'-monophosphate (OMP) to uridine 5'-monophosphate (UMP). The protein is Orotidine 5'-phosphate decarboxylase of Listeria monocytogenes serotype 4b (strain CLIP80459).